The primary structure comprises 82 residues: Small ribosomal subunit protein bS16 (82 aa).

It belongs to the bacterial ribosomal protein bS16 family.

The polypeptide is Small ribosomal subunit protein bS16 (Cyanothece sp. (strain PCC 7425 / ATCC 29141)).